We begin with the raw amino-acid sequence, 429 residues long: D-amino acid dehydrogenase (429 aa).

3–17 contacts FAD; that stretch reads VVVLGSGVVGVTSAY.

The protein belongs to the DadA oxidoreductase family. It depends on FAD as a cofactor.

It carries out the reaction a D-alpha-amino acid + A + H2O = a 2-oxocarboxylate + AH2 + NH4(+). It participates in amino-acid degradation; D-alanine degradation; NH(3) and pyruvate from D-alanine: step 1/1. Its function is as follows. Oxidative deamination of D-amino acids. The protein is D-amino acid dehydrogenase of Paraburkholderia xenovorans (strain LB400).